A 398-amino-acid polypeptide reads, in one-letter code: Nicotinate phosphoribosyltransferase 2 (398 aa).

His-224 is modified (phosphohistidine; by autocatalysis).

This sequence belongs to the NAPRTase family. Transiently phosphorylated on a His residue during the reaction cycle. Phosphorylation strongly increases the affinity for substrates and increases the rate of nicotinate D-ribonucleotide production. Dephosphorylation regenerates the low-affinity form of the enzyme, leading to product release.

It catalyses the reaction nicotinate + 5-phospho-alpha-D-ribose 1-diphosphate + ATP + H2O = nicotinate beta-D-ribonucleotide + ADP + phosphate + diphosphate. Its pathway is cofactor biosynthesis; NAD(+) biosynthesis; nicotinate D-ribonucleotide from nicotinate: step 1/1. In terms of biological role, catalyzes the synthesis of beta-nicotinate D-ribonucleotide from nicotinate and 5-phospho-D-ribose 1-phosphate at the expense of ATP. The protein is Nicotinate phosphoribosyltransferase 2 of Pseudomonas aeruginosa (strain ATCC 15692 / DSM 22644 / CIP 104116 / JCM 14847 / LMG 12228 / 1C / PRS 101 / PAO1).